We begin with the raw amino-acid sequence, 487 residues long: Gasdermin-D (487 aa).

Tyrosine 38 bears the Phosphotyrosine mark. S-(2-succinyl)cysteine is present on residues cysteine 39, cysteine 57, and cysteine 77. Beta stranded transmembrane passes span 92–98 (QGRVMLS) and 104–109 (KISGGA). An S-(2-succinyl)cysteine modification is found at cysteine 122. The next 2 membrane-spanning stretches (beta stranded) occupy residues 181-187 (GSGQFTL) and 192-198 (CLKGEGK). Cysteine 192 and cysteine 265 each carry S-(2-succinyl)cysteine. Cysteine 192 carries S-palmitoyl cysteine lipidation. The linker helix loop stretch occupies residues 278–298 (IDEEELIEAADFQGLYAEVKA). S-(2-succinyl)cysteine is present on residues cysteine 299, cysteine 434, and cysteine 487.

Belongs to the gasdermin family. Homooligomer; homooligomeric ring-shaped pore complex containing 27-28 subunits when inserted in the membrane. Homooligomerization is promoted by the mTORC1 complex in macrophages. In response to a canonical inflammasome stimulus, such as nigericin, recruited to NLRP3 inflammasone with similar kinetics to that of uncleaved CASP1 precursor. Although this recruitment is also observed in the absence of PYCARD, it is more efficient in its presence. Post-translationally, cleavage at Asp-276 by CASP1 (mature and uncleaved precursor forms), CASP4/CASP11 or CASP8 relieves autoinhibition and is sufficient to initiate pyroptosis. Cleavage by CASP1 and CASP4/CASP11 is not strictly dependent on the consensus cleavage site on GSDMD but depends on an exosite interface on CASP1 that recognizes and binds the Gasdermin-D, C-terminal (GSDMD-CT) part. Cleavage by CASP8 takes place following inactivation of MAP3K7/TAK1 by Yersinia toxin YopJ. Cleavage at Asp-88 by CASP3 or CASP7 inactivates the ability to mediate pyroptosis, but generates the Gasdermin-D, p13 chain, which translocates to the nucleus and acts as a transcription regulator. Cleavage by papain allergen generates the Gasdermin-D, p40 chain. In terms of processing, palmitoylated at Cys-192 by ZDHHC5 and ZDHHC9 in response to microbial infection and danger signals. May also be palmitoylated by ZDHHC7. Palmitoylation takes place before cleavage by caspases (CASP1, CASP4, CASP5 or CASP8) and is required for membrane translocation and pore formation. Depalmitoylated by LYPLA2. Succination of Cys-192 by the Krebs cycle intermediate fumarate, which leads to S-(2-succinyl)cysteine residues, inhibits processing by caspases, and ability to initiate pyroptosis. Succination modification is catalyzed by a non-enzymatic reaction caused by an accumulation of fumarate. Post-translationally, glycosylated: O-GlcNAcylation by OGT leads to reduced cleavage by CASP4 and decreased LPS-induced endothelial cell pyroptosis. In terms of tissue distribution, highly expressed in brain endothelial cells.

It is found in the cytoplasm. The protein resides in the cytosol. The protein localises to the inflammasome. It localises to the cell membrane. Its subcellular location is the secreted. It is found in the mitochondrion membrane. The protein resides in the nucleus. Its activity is regulated as follows. The full-length protein before cleavage is inactive: intramolecular interactions between N- and C-terminal domains mediate autoinhibition in the absence of activation signal. The intrinsic pyroptosis-inducing activity is carried by the released N-terminal moiety (Gasdermin-D, N-terminal) following cleavage by inflammatory caspases CASP1, CASP4/CASP11 or CASP8. Cleavage at Asp-88 by CASP3 or CASP7 inactivates the ability to mediate pyroptosis. Pore formation is specifically inhibited by VHH(GSDMD-1) nanobody, protecting against excessive pyroptosis. Inhibited by small molecule NU6300, which covalently reacts with Cys-191, thereby preventing palmitoylation and pyroptosis. Functionally, precursor of a pore-forming protein that plays a key role in host defense against pathogen infection and danger signals. This form constitutes the precursor of the pore-forming protein: upon cleavage, the released N-terminal moiety (Gasdermin-D, N-terminal) binds to membranes and forms pores, triggering pyroptosis. In terms of biological role, promotes pyroptosis in response to microbial infection and danger signals. Produced by the cleavage of gasdermin-D by inflammatory caspases CASP1 or CASP4/CASP11 in response to canonical, as well as non-canonical (such as cytosolic LPS) inflammasome activators. After cleavage, moves to the plasma membrane where it strongly binds to inner leaflet lipids, including monophosphorylated phosphatidylinositols, such as phosphatidylinositol 4-phosphate, bisphosphorylated phosphatidylinositols, such as phosphatidylinositol (4,5)-bisphosphate, as well as phosphatidylinositol (3,4,5)-bisphosphate, and more weakly to phosphatidic acid and phosphatidylserine. Homooligomerizes within the membrane and forms pores of 10-15 nanometers (nm) of inner diameter, allowing the release of mature interleukin-1 (IL1B and IL18) and triggering pyroptosis. Gasdermin pores also allow the release of mature caspase-7 (CASP7). In some, but not all, cells types, pyroptosis is followed by pyroptotic cell death, which is caused by downstream activation of ninjurin-1 (NINJ1), which mediates membrane rupture (cytolysis). Also forms pores in the mitochondrial membrane, resulting in release of mitochondrial DNA (mtDNA) into the cytosol. Gasdermin-D, N-terminal released from pyroptotic cells into the extracellular milieu rapidly binds to and kills both Gram-negative and Gram-positive bacteria, without harming neighboring mammalian cells, as it does not disrupt the plasma membrane from the outside due to lipid-binding specificity. Under cell culture conditions, also active against intracellular bacteria, such as Listeria monocytogenes. Also active in response to MAP3K7/TAK1 inactivation by Yersinia toxin YopJ, which triggers cleavage by CASP8 and subsequent activation. Required for mucosal tissue defense against enteric pathogens. Activation of the non-canonical inflammasome in brain endothelial cells can lead to excessive pyroptosis, leading to blood-brain barrier breakdown. Strongly binds to bacterial and mitochondrial lipids, including cardiolipin. Does not bind to unphosphorylated phosphatidylinositol, phosphatidylethanolamine nor phosphatidylcholine. Transcription coactivator produced by the cleavage by CASP3 or CASP7 in the upper small intestine in response to dietary antigens. Required to maintain food tolerance in small intestine: translocates to the nucleus and acts as a coactivator for STAT1 to induce the transcription of CIITA and MHC class II molecules, which in turn induce type 1 regulatory T (Tr1) cells in upper small intestine. Its function is as follows. Produced by the cleavage by papain allergen. After cleavage, moves to the plasma membrane and homooligomerizes within the membrane and forms pores of 10-15 nanometers (nm) of inner diameter, allowing the specific release of mature interleukin-33 (IL33), promoting type 2 inflammatory immune response. The chain is Gasdermin-D from Mus musculus (Mouse).